Reading from the N-terminus, the 338-residue chain is Methionine import ATP-binding protein MetN 2 (338 aa).

In terms of domain architecture, ABC transporter spans 2 to 242; the sequence is IQLEGVSVDF…PQHAFTRQLV (241 aa). Residue 39–46 participates in ATP binding; the sequence is GTSGAGKS.

This sequence belongs to the ABC transporter superfamily. Methionine importer (TC 3.A.1.24) family. As to quaternary structure, the complex is composed of two ATP-binding proteins (MetN), two transmembrane proteins (MetI) and a solute-binding protein (MetQ).

The protein localises to the cell inner membrane. The catalysed reaction is L-methionine(out) + ATP + H2O = L-methionine(in) + ADP + phosphate + H(+). The enzyme catalyses D-methionine(out) + ATP + H2O = D-methionine(in) + ADP + phosphate + H(+). Functionally, part of the ABC transporter complex MetNIQ involved in methionine import. Responsible for energy coupling to the transport system. In Pectobacterium atrosepticum (strain SCRI 1043 / ATCC BAA-672) (Erwinia carotovora subsp. atroseptica), this protein is Methionine import ATP-binding protein MetN 2.